The following is a 462-amino-acid chain: Alkaline phosphatase 3 (462 aa).

Positions 1–32 are cleaved as a signal peptide; sequence MKKFPKKLLPIAVLSSIAFSSLASGSVPEASA. D52 contacts Mg(2+). D52 is a binding site for Zn(2+). Catalysis depends on S101, which acts as the Phosphoserine intermediate. Mg(2+) contacts are provided by T154 and E275. 5 residues coordinate Zn(2+): D280, H284, D322, H323, and H419.

Belongs to the alkaline phosphatase family. Monomer. Requires Mg(2+) as cofactor. Zn(2+) is required as a cofactor.

The enzyme catalyses a phosphate monoester + H2O = an alcohol + phosphate. The polypeptide is Alkaline phosphatase 3 (phoB) (Bacillus subtilis (strain 168)).